The chain runs to 404 residues: Formate-dependent phosphoribosylglycinamide formyltransferase (404 aa).

Residues glutamate 25–leucine 26 and glutamate 85 each bind N(1)-(5-phospho-beta-D-ribosyl)glycinamide. ATP is bound by residues arginine 118, lysine 159, serine 164 to glutamine 169, glutamate 199 to isoleucine 202, and glutamate 207. The region spanning arginine 123 to leucine 318 is the ATP-grasp domain. 2 residues coordinate Mg(2+): glutamate 277 and glutamate 289. Residues aspartate 296, lysine 365, and arginine 372–arginine 373 each bind N(1)-(5-phospho-beta-D-ribosyl)glycinamide.

Belongs to the PurK/PurT family. In terms of assembly, homodimer.

The enzyme catalyses N(1)-(5-phospho-beta-D-ribosyl)glycinamide + formate + ATP = N(2)-formyl-N(1)-(5-phospho-beta-D-ribosyl)glycinamide + ADP + phosphate + H(+). It participates in purine metabolism; IMP biosynthesis via de novo pathway; N(2)-formyl-N(1)-(5-phospho-D-ribosyl)glycinamide from N(1)-(5-phospho-D-ribosyl)glycinamide (formate route): step 1/1. Functionally, involved in the de novo purine biosynthesis. Catalyzes the transfer of formate to 5-phospho-ribosyl-glycinamide (GAR), producing 5-phospho-ribosyl-N-formylglycinamide (FGAR). Formate is provided by PurU via hydrolysis of 10-formyl-tetrahydrofolate. This chain is Formate-dependent phosphoribosylglycinamide formyltransferase, found in Burkholderia lata (strain ATCC 17760 / DSM 23089 / LMG 22485 / NCIMB 9086 / R18194 / 383).